The sequence spans 352 residues: Uroporphyrinogen decarboxylase (352 aa).

Residues 29-33 (RQAGR), F48, D78, Y154, S209, and H322 each bind substrate.

Belongs to the uroporphyrinogen decarboxylase family. Homodimer.

Its subcellular location is the cytoplasm. It carries out the reaction uroporphyrinogen III + 4 H(+) = coproporphyrinogen III + 4 CO2. It participates in porphyrin-containing compound metabolism; protoporphyrin-IX biosynthesis; coproporphyrinogen-III from 5-aminolevulinate: step 4/4. Catalyzes the decarboxylation of four acetate groups of uroporphyrinogen-III to yield coproporphyrinogen-III. This Bacillus pumilus (strain SAFR-032) protein is Uroporphyrinogen decarboxylase.